The sequence spans 344 residues: Dihydroorotase (344 aa).

Zn(2+) contacts are provided by histidine 14 and histidine 16. Residues 16 to 18 (HFR) and asparagine 42 contribute to the substrate site. Zn(2+) contacts are provided by lysine 100, histidine 137, and histidine 175. Residue lysine 100 is modified to N6-carboxylysine. Histidine 137 serves as a coordination point for substrate. Residue leucine 220 participates in substrate binding. Residue aspartate 248 participates in Zn(2+) binding. Residue aspartate 248 is part of the active site. Residues histidine 252 and alanine 264 each contribute to the substrate site.

Belongs to the metallo-dependent hydrolases superfamily. DHOase family. Class II DHOase subfamily. Homodimer. Zn(2+) serves as cofactor.

The enzyme catalyses (S)-dihydroorotate + H2O = N-carbamoyl-L-aspartate + H(+). It participates in pyrimidine metabolism; UMP biosynthesis via de novo pathway; (S)-dihydroorotate from bicarbonate: step 3/3. Catalyzes the reversible cyclization of carbamoyl aspartate to dihydroorotate. The polypeptide is Dihydroorotase (Alcanivorax borkumensis (strain ATCC 700651 / DSM 11573 / NCIMB 13689 / SK2)).